The sequence spans 799 residues: Protein translocase subunit SecA (799 aa).

Residues Gln85, 103 to 107 (GEGKT), and Asp504 contribute to the ATP site.

The protein belongs to the SecA family. In terms of assembly, monomer and homodimer. Part of the essential Sec protein translocation apparatus which comprises SecA, SecYEG and auxiliary proteins SecDF. Other proteins may also be involved.

It is found in the cell membrane. Its subcellular location is the cytoplasm. It carries out the reaction ATP + H2O + cellular proteinSide 1 = ADP + phosphate + cellular proteinSide 2.. In terms of biological role, part of the Sec protein translocase complex. Interacts with the SecYEG preprotein conducting channel. Has a central role in coupling the hydrolysis of ATP to the transfer of proteins into and across the cell membrane, serving as an ATP-driven molecular motor driving the stepwise translocation of polypeptide chains across the membrane. The chain is Protein translocase subunit SecA from Lactobacillus gasseri (strain ATCC 33323 / DSM 20243 / BCRC 14619 / CIP 102991 / JCM 1131 / KCTC 3163 / NCIMB 11718 / NCTC 13722 / AM63).